Consider the following 443-residue polypeptide: D-inositol 3-phosphate glycosyltransferase (443 aa).

His-30 provides a ligand contact to 1D-myo-inositol 3-phosphate. UDP-N-acetyl-alpha-D-glucosamine is bound by residues 36–37 (QP) and Gly-44. 1D-myo-inositol 3-phosphate-binding positions include 41 to 46 (DAGGMN), Lys-99, Tyr-132, Thr-156, and Arg-176. The UDP-N-acetyl-alpha-D-glucosamine site is built by Arg-250, Lys-255, and Arg-316. Mg(2+) is bound by residues Phe-325, Arg-326, and Cys-328. Positions 338 and 346 each coordinate UDP-N-acetyl-alpha-D-glucosamine. Thr-352 lines the Mg(2+) pocket.

This sequence belongs to the glycosyltransferase group 1 family. MshA subfamily. Homodimer.

It carries out the reaction 1D-myo-inositol 3-phosphate + UDP-N-acetyl-alpha-D-glucosamine = 1D-myo-inositol 2-acetamido-2-deoxy-alpha-D-glucopyranoside 3-phosphate + UDP + H(+). Its function is as follows. Catalyzes the transfer of a N-acetyl-glucosamine moiety to 1D-myo-inositol 3-phosphate to produce 1D-myo-inositol 2-acetamido-2-deoxy-glucopyranoside 3-phosphate in the mycothiol biosynthesis pathway. The sequence is that of D-inositol 3-phosphate glycosyltransferase from Stackebrandtia nassauensis (strain DSM 44728 / CIP 108903 / NRRL B-16338 / NBRC 102104 / LLR-40K-21).